Here is an 80-residue protein sequence, read N- to C-terminus: DNA-directed RNA polymerase subunit Rpo5 (80 aa).

Belongs to the archaeal Rpo5/eukaryotic RPB5 RNA polymerase subunit family. In terms of assembly, part of the RNA polymerase complex.

It localises to the cytoplasm. The enzyme catalyses RNA(n) + a ribonucleoside 5'-triphosphate = RNA(n+1) + diphosphate. In terms of biological role, DNA-dependent RNA polymerase (RNAP) catalyzes the transcription of DNA into RNA using the four ribonucleoside triphosphates as substrates. In Thermofilum pendens (strain DSM 2475 / Hrk 5), this protein is DNA-directed RNA polymerase subunit Rpo5.